The following is a 142-amino-acid chain: Hemoglobin subunit alpha (142 aa).

Residues 2–142 form the Globin domain; sequence VLSGEDKSNI…VSTVLTSKYR (141 aa). Ser-4 bears the Phosphoserine mark. Lys-8 and Lys-12 each carry N6-succinyllysine. Lys-17 is modified (N6-acetyllysine; alternate). Lys-17 is subject to N6-succinyllysine; alternate. A Phosphotyrosine modification is found at Tyr-25. Ser-36 bears the Phosphoserine mark. Position 41 is an N6-succinyllysine (Lys-41). At Ser-50 the chain carries Phosphoserine. Residue His-59 participates in O2 binding. Residue His-88 coordinates heme b. Ser-103 carries the post-translational modification Phosphoserine. The residue at position 109 (Thr-109) is a Phosphothreonine. Ser-112, Ser-125, and Ser-132 each carry phosphoserine. Phosphothreonine occurs at positions 135 and 138. A Phosphoserine modification is found at Ser-139.

This sequence belongs to the globin family. As to quaternary structure, heterotetramer of two alpha chains and two beta chains. As to expression, red blood cells.

Involved in oxygen transport from the lung to the various peripheral tissues. Its function is as follows. Hemopressin acts as an antagonist peptide of the cannabinoid receptor CNR1. Hemopressin-binding efficiently blocks cannabinoid receptor CNR1 and subsequent signaling. The polypeptide is Hemoglobin subunit alpha (Hba) (Mus musculus (Mouse)).